The chain runs to 340 residues: Short-chain dehydrogenase/reductase prx1 (340 aa).

The NADP(+) site is built by isoleucine 60, lysine 84, aspartate 104, asparagine 131, and lysine 162. The active-site Proton donor is serine 184. Residues tyrosine 210 and lysine 214 each contribute to the NADP(+) site. Catalysis depends on tyrosine 210, which acts as the Proton acceptor. The active-site Lowers pKa of active site Tyr is lysine 214.

It belongs to the short-chain dehydrogenases/reductases (SDR) family.

The protein operates within sesquiterpene biosynthesis. Its function is as follows. Short-chain dehydrogenase/reductase; part of the gene cluster that mediates the biosynthesis of PR-toxin, a bicyclic sesquiterpene belonging to the eremophilane class and acting as a mycotoxin. The first step of the pathway is catalyzed by the aristolochene synthase which performs the cyclization of trans,trans-farnesyl diphosphate (FPP) to the bicyclic sesquiterpene aristolochene. Following the formation of aristolochene, the non-oxygenated aristolochene is converted to the trioxygenated intermediate eremofortin B, via 7-epi-neopetasone. This conversion appears to involve three enzymes, a hydroxysterol oxidase-like enzyme, the quinone-oxidase prx3 that forms the quinone-type-structure in the bicyclic nucleus of aristolochene with the C8-oxo group and the C-3 hydroxyl group, and the P450 monooxygenase ORF6 that introduces the epoxide at the double bond between carbons 1 and 2. No monoxy or dioxy-intermediates have been reported to be released to the broth, so these three early oxidative reactions may be coupled together. Eremofortin B is further oxidized by another P450 monooxygenase, that introduces a second epoxide between carbons 7 and 11 prior to acetylation to eremofortin A by the acetyltransferase ORF8. The second epoxidation may be performed by a second P450 monooxygenase. After the acetylation step, eremofortin A is converted to eremofortin C and then to PR-toxin. First the conversion of eremofortin A to eremofortin C proceeds by oxidation of the side chain of the molecule at C-12 and is catalyzed by the short-chain oxidoreductase prx1. The cytochrome P450 monooxygenase ORF6 is probably also involved in this step. The primary alcohol formed at C-12 is finally oxidized by the short-chain alcohol dehydrogenase prx4 that forms PR-toxin. The polypeptide is Short-chain dehydrogenase/reductase prx1 (Penicillium roqueforti (strain FM164)).